A 413-amino-acid polypeptide reads, in one-letter code: MAGMGRTAREGARALRLATPEQRTAAIQAMAVAIREDADAILTANAKDLARAEANGVSGPMLDRLALDAARLEGVAAGVEAVAAVPDPVGVATSRWTRPNGLDIARVRTPIGVIAMIYESRPNVTADAAALCVRSGNAVILRGGSECIHSNLAIHAAIARGLQKAGLPTAAVQAVKTPDRAAVGMILAGLDRTIDLIIPRGGKSLVARVQAEARAPVLGHLEGLNHVFVHAAADLKKAVEVVVNAKLRRVSVCGSAETLLIDQAAADKLLPPIADALIKAGCELRGDAAARAIEPTMKKATVEDWTTEYLAPILSVAVVDGVAGAARHIASYGSGHTDAIITEDAAAAEAFIAEVDSAIVLVNASTQFADGGEFGFGAEIGIATDKLHARGPVGAEQLTTFKYVVRGTGQTRP.

The protein belongs to the gamma-glutamyl phosphate reductase family.

Its subcellular location is the cytoplasm. The catalysed reaction is L-glutamate 5-semialdehyde + phosphate + NADP(+) = L-glutamyl 5-phosphate + NADPH + H(+). Its pathway is amino-acid biosynthesis; L-proline biosynthesis; L-glutamate 5-semialdehyde from L-glutamate: step 2/2. Functionally, catalyzes the NADPH-dependent reduction of L-glutamate 5-phosphate into L-glutamate 5-semialdehyde and phosphate. The product spontaneously undergoes cyclization to form 1-pyrroline-5-carboxylate. The protein is Gamma-glutamyl phosphate reductase of Caulobacter vibrioides (strain ATCC 19089 / CIP 103742 / CB 15) (Caulobacter crescentus).